Here is a 363-residue protein sequence, read N- to C-terminus: UDP-N-acetylglucosamine--N-acetylmuramyl-(pentapeptide) pyrophosphoryl-undecaprenol N-acetylglucosamine transferase (363 aa).

UDP-N-acetyl-alpha-D-glucosamine is bound by residues threonine 10–glycine 12, asparagine 124, serine 195, isoleucine 250, and glutamine 295.

This sequence belongs to the glycosyltransferase 28 family. MurG subfamily.

It is found in the cell membrane. It carries out the reaction di-trans,octa-cis-undecaprenyl diphospho-N-acetyl-alpha-D-muramoyl-L-alanyl-D-glutamyl-meso-2,6-diaminopimeloyl-D-alanyl-D-alanine + UDP-N-acetyl-alpha-D-glucosamine = di-trans,octa-cis-undecaprenyl diphospho-[N-acetyl-alpha-D-glucosaminyl-(1-&gt;4)]-N-acetyl-alpha-D-muramoyl-L-alanyl-D-glutamyl-meso-2,6-diaminopimeloyl-D-alanyl-D-alanine + UDP + H(+). Its pathway is cell wall biogenesis; peptidoglycan biosynthesis. Its function is as follows. Cell wall formation. Catalyzes the transfer of a GlcNAc subunit on undecaprenyl-pyrophosphoryl-MurNAc-pentapeptide (lipid intermediate I) to form undecaprenyl-pyrophosphoryl-MurNAc-(pentapeptide)GlcNAc (lipid intermediate II). The sequence is that of UDP-N-acetylglucosamine--N-acetylmuramyl-(pentapeptide) pyrophosphoryl-undecaprenol N-acetylglucosamine transferase from Listeria monocytogenes serotype 4a (strain HCC23).